A 119-amino-acid chain; its full sequence is Ribonuclease P protein component (119 aa).

The protein belongs to the RnpA family. As to quaternary structure, consists of a catalytic RNA component (M1 or rnpB) and a protein subunit.

It carries out the reaction Endonucleolytic cleavage of RNA, removing 5'-extranucleotides from tRNA precursor.. In terms of biological role, RNaseP catalyzes the removal of the 5'-leader sequence from pre-tRNA to produce the mature 5'-terminus. It can also cleave other RNA substrates such as 4.5S RNA. The protein component plays an auxiliary but essential role in vivo by binding to the 5'-leader sequence and broadening the substrate specificity of the ribozyme. The chain is Ribonuclease P protein component from Chlamydia muridarum (strain MoPn / Nigg).